Reading from the N-terminus, the 437-residue chain is Serine hydroxymethyltransferase (437 aa).

Residues L130 and 134-136 (GHL) each bind (6S)-5,6,7,8-tetrahydrofolate. K239 is subject to N6-(pyridoxal phosphate)lysine. 363–365 (TPF) provides a ligand contact to (6S)-5,6,7,8-tetrahydrofolate.

This sequence belongs to the SHMT family. In terms of assembly, homodimer. Pyridoxal 5'-phosphate is required as a cofactor.

The protein localises to the cytoplasm. It catalyses the reaction (6R)-5,10-methylene-5,6,7,8-tetrahydrofolate + glycine + H2O = (6S)-5,6,7,8-tetrahydrofolate + L-serine. It participates in one-carbon metabolism; tetrahydrofolate interconversion. It functions in the pathway amino-acid biosynthesis; glycine biosynthesis; glycine from L-serine: step 1/1. Its function is as follows. Catalyzes the reversible interconversion of serine and glycine with tetrahydrofolate (THF) serving as the one-carbon carrier. This reaction serves as the major source of one-carbon groups required for the biosynthesis of purines, thymidylate, methionine, and other important biomolecules. Also exhibits THF-independent aldolase activity toward beta-hydroxyamino acids, producing glycine and aldehydes, via a retro-aldol mechanism. In Bartonella henselae (strain ATCC 49882 / DSM 28221 / CCUG 30454 / Houston 1) (Rochalimaea henselae), this protein is Serine hydroxymethyltransferase.